We begin with the raw amino-acid sequence, 329 residues long: Phosphate import ATP-binding protein PstB (329 aa).

The region spanning 83 to 325 (FEIRNFNFWY…PKQKATNSYI (243 aa)) is the ABC transporter domain. 116–123 (GKSGCGKS) contributes to the ATP binding site.

This sequence belongs to the ABC transporter superfamily. Phosphate importer (TC 3.A.1.7) family. The complex is composed of two ATP-binding proteins (PstB), two transmembrane proteins (PstC and PstA) and a solute-binding protein (PstS).

It localises to the cell membrane. The catalysed reaction is phosphate(out) + ATP + H2O = ADP + 2 phosphate(in) + H(+). Part of the ABC transporter complex PstSACB involved in phosphate import. Responsible for energy coupling to the transport system. The polypeptide is Phosphate import ATP-binding protein PstB (Mycoplasma genitalium (strain ATCC 33530 / DSM 19775 / NCTC 10195 / G37) (Mycoplasmoides genitalium)).